We begin with the raw amino-acid sequence, 199 residues long: Outer-membrane lipoprotein LolB (199 aa).

A signal peptide spans 1-28; the sequence is MSACPAPRSPFRWLHAFTLCLLLAVLAG. Cys-29 carries N-palmitoyl cysteine lipidation. Residue Cys-29 is the site of S-diacylglycerol cysteine attachment.

The protein belongs to the LolB family. In terms of assembly, monomer.

It localises to the cell outer membrane. Its function is as follows. Plays a critical role in the incorporation of lipoproteins in the outer membrane after they are released by the LolA protein. The polypeptide is Outer-membrane lipoprotein LolB (Bordetella bronchiseptica (strain ATCC BAA-588 / NCTC 13252 / RB50) (Alcaligenes bronchisepticus)).